Reading from the N-terminus, the 2264-residue chain is RNA1 polyprotein (2264 aa).

At 566-1156 (MCTALAAGIF…MGRTYLAENG (591 aa)) the chain is on the cytoplasmic side. The region spanning 750–916 (TEGPNELHKR…PGVLFDPDNP (167 aa)) is the SF3 helicase domain. Residue 780-787 (GQRHCGKS) participates in ATP binding. The helical transmembrane segment at 1157–1177 (CGILMIAAALILILVSAWGFW) threads the bilayer. Residues 1178 to 1203 (KLFIGLFSGSMSLGAAIVGMSAVDIK) are Lumenal-facing. In terms of domain architecture, Peptidase C3 spans 1227 to 1436 (AYAKSQAGDG…WADIMPPNTL (210 aa)). Catalysis depends on for picornain 3C-like protease activity residues H1270, E1308, and C1400. A RdRp catalytic domain is found at 1713 to 1841 (NEAINCDYSG…SVSPSIASWF (129 aa)).

The protein belongs to the nepoviruses RNA1 polyprotein family. In terms of processing, specific enzymatic cleavages by picornain 3C-like protease in vivo yield mature proteins. Picornain 3C-like protease is autocatalytically processed. VPg is uridylylated by the polymerase and is covalently linked to the 5'-end of genomic RNA. This uridylylated form acts as a nucleotide-peptide primer for the polymerase.

The protein resides in the host endoplasmic reticulum lumen. It is found in the host endoplasmic reticulum membrane. It catalyses the reaction RNA(n) + a ribonucleoside 5'-triphosphate = RNA(n+1) + diphosphate. Functionally, picornain 3C-like protease is a thiol protease that cleaves the P1 and P2 polyproteins. The sequence is that of RNA1 polyprotein from Beet ringspot virus (BRSV).